Here is a 167-residue protein sequence, read N- to C-terminus: Protein archease (167 aa).

Ala-2 carries the N-acetylalanine modification. Asp-39, Asp-166, and Ile-167 together coordinate Ca(2+).

This sequence belongs to the archease family. As to quaternary structure, component of the tRNA-splicing ligase complex.

In terms of biological role, component of the tRNA-splicing ligase complex required to facilitate the enzymatic turnover of catalytic subunit RTCB. Together with DDX1, acts by facilitating the guanylylation of RTCB, a key intermediate step in tRNA ligation. The protein is Protein archease (ZBTB8OS) of Bos taurus (Bovine).